Here is a 358-residue protein sequence, read N- to C-terminus: DnaJ homolog subfamily C member 18 (358 aa).

Residues 82-146 form the J domain; that stretch reads NYYEILGVSR…DKRLRYDEYG (65 aa). The chain crosses the membrane as a helical span at residues 228-248; that stretch reads AFIQLLPVLVIVIISVITQLL.

It is found in the endoplasmic reticulum membrane. This is DnaJ homolog subfamily C member 18 (DNAJC18) from Bos taurus (Bovine).